The primary structure comprises 148 residues: Large ribosomal subunit protein bL9 (148 aa).

Belongs to the bacterial ribosomal protein bL9 family.

Functionally, binds to the 23S rRNA. This is Large ribosomal subunit protein bL9 from Frankia alni (strain DSM 45986 / CECT 9034 / ACN14a).